A 95-amino-acid polypeptide reads, in one-letter code: UPF0235 protein PTH_1821 (95 aa).

Belongs to the UPF0235 family.

The protein is UPF0235 protein PTH_1821 of Pelotomaculum thermopropionicum (strain DSM 13744 / JCM 10971 / SI).